A 156-amino-acid chain; its full sequence is Arginine repressor (156 aa).

Belongs to the ArgR family.

Its subcellular location is the cytoplasm. It functions in the pathway amino-acid biosynthesis; L-arginine biosynthesis [regulation]. Regulates arginine biosynthesis genes. The polypeptide is Arginine repressor (Shewanella sp. (strain ANA-3)).